We begin with the raw amino-acid sequence, 602 residues long: GTP-binding protein 2 (602 aa).

Positions 16–64 (GGGPAVGGTLKARGAGSSSGCGGPKGKKKNGRNRGGKANNPPYLPPEAE) are disordered. A compositionally biased stretch (basic residues) spans 40 to 50 (KGKKKNGRNRG). A tr-type G domain is found at 170 to 398 (FLDLRVAVLG…LNILPPLTNS (229 aa)). Residues 179–186 (GNVDSGKS), 260–264 (DLAGH), and 316–319 (SKID) each bind GTP.

The protein belongs to the TRAFAC class translation factor GTPase superfamily. Classic translation factor GTPase family. GTPBP1 subfamily. In terms of tissue distribution, predominantly expressed in thymus, spleen, and testis. Expressed at lower levels in brain, lung, kidney, and ovary.

The polypeptide is GTP-binding protein 2 (Homo sapiens (Human)).